Consider the following 288-residue polypeptide: Bifunctional protein FolD (288 aa).

NADP(+) contacts are provided by residues 164–166, Ser193, and Ile234; that span reads GRS.

Belongs to the tetrahydrofolate dehydrogenase/cyclohydrolase family. Homodimer.

It carries out the reaction (6R)-5,10-methylene-5,6,7,8-tetrahydrofolate + NADP(+) = (6R)-5,10-methenyltetrahydrofolate + NADPH. The catalysed reaction is (6R)-5,10-methenyltetrahydrofolate + H2O = (6R)-10-formyltetrahydrofolate + H(+). It functions in the pathway one-carbon metabolism; tetrahydrofolate interconversion. Catalyzes the oxidation of 5,10-methylenetetrahydrofolate to 5,10-methenyltetrahydrofolate and then the hydrolysis of 5,10-methenyltetrahydrofolate to 10-formyltetrahydrofolate. This Nitratidesulfovibrio vulgaris (strain DSM 19637 / Miyazaki F) (Desulfovibrio vulgaris) protein is Bifunctional protein FolD.